The following is a 421-amino-acid chain: Gamma-glutamyl phosphate reductase (421 aa).

It belongs to the gamma-glutamyl phosphate reductase family.

Its subcellular location is the cytoplasm. The enzyme catalyses L-glutamate 5-semialdehyde + phosphate + NADP(+) = L-glutamyl 5-phosphate + NADPH + H(+). It participates in amino-acid biosynthesis; L-proline biosynthesis; L-glutamate 5-semialdehyde from L-glutamate: step 2/2. Catalyzes the NADPH-dependent reduction of L-glutamate 5-phosphate into L-glutamate 5-semialdehyde and phosphate. The product spontaneously undergoes cyclization to form 1-pyrroline-5-carboxylate. This is Gamma-glutamyl phosphate reductase from Acinetobacter baylyi (strain ATCC 33305 / BD413 / ADP1).